Consider the following 426-residue polypeptide: Serine--tRNA ligase (426 aa).

233-235 contributes to the L-serine binding site; that stretch reads TAE. Residue 264–266 participates in ATP binding; the sequence is RSE. Glu-287 is an L-serine binding site. Residue 351-354 participates in ATP binding; sequence EISS. Ser-387 provides a ligand contact to L-serine.

Belongs to the class-II aminoacyl-tRNA synthetase family. Type-1 seryl-tRNA synthetase subfamily. Homodimer. The tRNA molecule binds across the dimer.

It is found in the cytoplasm. It carries out the reaction tRNA(Ser) + L-serine + ATP = L-seryl-tRNA(Ser) + AMP + diphosphate + H(+). The catalysed reaction is tRNA(Sec) + L-serine + ATP = L-seryl-tRNA(Sec) + AMP + diphosphate + H(+). The protein operates within aminoacyl-tRNA biosynthesis; selenocysteinyl-tRNA(Sec) biosynthesis; L-seryl-tRNA(Sec) from L-serine and tRNA(Sec): step 1/1. Functionally, catalyzes the attachment of serine to tRNA(Ser). Is also able to aminoacylate tRNA(Sec) with serine, to form the misacylated tRNA L-seryl-tRNA(Sec), which will be further converted into selenocysteinyl-tRNA(Sec). This chain is Serine--tRNA ligase, found in Clostridium botulinum (strain Okra / Type B1).